A 383-amino-acid chain; its full sequence is Chaperone protein DnaJ (383 aa).

The J domain occupies 5 to 70 (DYYDVLGVSK…DKKAAYDRYG (66 aa)). The CR-type zinc finger occupies 142–220 (GMQKTISVPG…CRGAGREEKT (79 aa)). Zn(2+) contacts are provided by Cys155, Cys158, Cys172, Cys175, Cys194, Cys197, Cys208, and Cys211. CXXCXGXG motif repeat units lie at residues 155–162 (CSACEGTG), 172–179 (CPTCSGMG), 194–201 (CPTCSGMG), and 208–215 (CQACRGAG).

Belongs to the DnaJ family. In terms of assembly, homodimer. Zn(2+) is required as a cofactor.

The protein resides in the cytoplasm. Participates actively in the response to hyperosmotic and heat shock by preventing the aggregation of stress-denatured proteins and by disaggregating proteins, also in an autonomous, DnaK-independent fashion. Unfolded proteins bind initially to DnaJ; upon interaction with the DnaJ-bound protein, DnaK hydrolyzes its bound ATP, resulting in the formation of a stable complex. GrpE releases ADP from DnaK; ATP binding to DnaK triggers the release of the substrate protein, thus completing the reaction cycle. Several rounds of ATP-dependent interactions between DnaJ, DnaK and GrpE are required for fully efficient folding. Also involved, together with DnaK and GrpE, in the DNA replication of plasmids through activation of initiation proteins. The polypeptide is Chaperone protein DnaJ (Dinoroseobacter shibae (strain DSM 16493 / NCIMB 14021 / DFL 12)).